Consider the following 93-residue polypeptide: Class I hydrophobin SSP1 (93 aa).

The N-terminal stretch at 1-26 (MKYITAISMLATAALTAATPLNGVEA) is a signal peptide. 4 disulfide bridges follow: cysteine 39–cysteine 71, cysteine 47–cysteine 65, cysteine 48–cysteine 56, and cysteine 72–cysteine 89.

Belongs to the fungal hydrophobin family. Self-assembles to form functional amyloid fibrils called rodlets. Self-assembly into fibrillar rodlets occurs spontaneously at hydrophobic:hydrophilic interfaces and the rodlets further associate laterally to form amphipathic monolayers.

It is found in the secreted. Its subcellular location is the cell wall. Aerial growth, conidiation, and dispersal of filamentous fungi in the environment rely upon a capability of their secreting small amphipathic proteins called hydrophobins (HPBs) with low sequence identity. Class I can self-assemble into an outermost layer of rodlet bundles on aerial cell surfaces, conferring cellular hydrophobicity that supports fungal growth, development and dispersal; whereas Class II form highly ordered films at water-air interfaces through intermolecular interactions but contribute nothing to the rodlet structure. SSP1 is a class I hydrophobin that acts as an effector in the ericoid mycorrhizal interaction with Vaccinium myrtillus. May enhance attachment of the fungus to the root surface and protect the fungal hypha from plant defense compounds. The chain is Class I hydrophobin SSP1 from Oidiodendron maius (strain Zn).